The sequence spans 1145 residues: Adenylate cyclase type 3 (1145 aa).

Residues 1-79 (MPRNQGFSDP…FKRQRHETLL (79 aa)) are Cytoplasmic-facing. Transmembrane regions (helical) follow at residues 80–100 (VLVV…AVVF), 105–125 (LAPL…FVLC), 139–159 (VPYL…GLNF), 173–193 (AFFV…IVII), and 226–246 (ILAN…SYYM). Mg(2+) is bound by residues Asp-324, Ile-325, and Asp-368. Residues 324-329 (DIVGFT) and 366-368 (LGD) each bind ATP. The helical transmembrane segment at 381–401 (EDHAVCSILMGLAMVEAISYV) threads the bilayer. The Cytoplasmic segment spans residues 402–631 (REKTKTGVDM…RYSVEKEKQS (230 aa)). Arg-412 contacts ATP. A Glycyl lysine isopeptide (Lys-Gly) (interchain with G-Cter in SUMO3) cross-link involves residue Lys-465. Residues 504–564 (QNGLNGSAVP…DNPSFPNPRR (61 aa)) form a disordered region. Low complexity-rich tracts occupy residues 516 to 526 (APASSKPSSPA) and 535 to 544 (GSAHASGSTS). A Phosphoserine modification is found at Ser-524. Ser-579 is modified (phosphoserine). The next 3 membrane-spanning stretches (helical) occupy residues 632-652 (GAAF…EILI), 663-683 (FVVG…AIFP), and 707-727 (WAML…LSCL). Asn-735 is a glycosylation site (N-linked (GlcNAc...) asparagine). A run of 3 helical transmembrane segments spans residues 753 to 773 (YNYV…VSHM), 774 to 794 (VKLT…LYAW), and 834 to 854 (LPLV…MLSF). Topologically, residues 855–1145 (YYFSRHVEKL…TLPHQVVDNP (291 aa)) are cytoplasmic. Residues Lys-976, 1063–1065 (DIW), and 1070–1074 (NVASR) contribute to the ATP site. The residue at position 1077 (Ser-1077) is a Phosphoserine; by CaMK2. Lys-1110 serves as a coordination point for ATP.

It belongs to the adenylyl cyclase class-4/guanylyl cyclase family. Requires Mg(2+) as cofactor. It depends on Mn(2+) as a cofactor. Post-translationally, N-glycosylated. In terms of processing, rapidly phosphorylated after stimulation by odorants or forskolin. Phosphorylation by CaMK2 at Ser-1077 down-regulates enzyme activity. Sumoylated. Sumoylation is required for targeting of olfactory cilia. As to expression, detected in the acrosomal region of epididymal spermatozoa, the acrosomal region of round spermatids and in elongating spermatids. Detected in cilia in the olfactory epithelium (at protein level). Detected in olfactory epithelium neurons. Detected in brain, testis, late pachytene spermatocytes, round spermatids and elongating spermatids.

The protein resides in the cell membrane. It is found in the cell projection. The protein localises to the cilium. Its subcellular location is the golgi apparatus. It localises to the cytoplasm. The catalysed reaction is ATP = 3',5'-cyclic AMP + diphosphate. Specifically activated by the G alpha protein GNAL/G(olf) in signaling cascades triggered by odorant receptors. Activated by forskolin. After forskolin treatment, activity is further increased by calcium/calmodulin. In the absence of forskolin, calcium/calmodulin has little effect on enzyme activity. In terms of biological role, catalyzes the formation of the signaling molecule cAMP in response to G-protein signaling. Participates in signaling cascades triggered by odorant receptors via its function in cAMP biosynthesis: specifically activated by G alpha protein GNAL/G(olf) in olfactory epithelium. Required for the perception of odorants. Required for normal sperm motility and normal male fertility. Plays a role in regulating insulin levels and body fat accumulation in response to a high fat diet. This chain is Adenylate cyclase type 3 (Adcy3), found in Mus musculus (Mouse).